The primary structure comprises 334 residues: MLRIFHNTKYEFVRWWRVAAGLTLAFIAAGFVSFAVTGGVNYSIEFTGGTLMQLQFKTPPDVAEVRSALDAAGIQGAEIQQFGANTDFTIRARDEKQVEAQDAGAEGISRQITAALDAKFGAGTVTIVRTEAVGPKVGAELRTGAAMAMLIASIFTLIYLAIRFDWRFGLAAVLSTTHDILITLAFIKIFHIEVSLTVVAAILTLVGYSANDTIIIFDRVRENLKKPHKGETLSHILDRSINETLPRSIMTHTTTFSATLALLLLAGEVIRPFAWVMAFGVVMATFSSIYVAGPLLLWIEGRWPRLDDAATARAVRAGEAATTTARGTDRVSAR.

Helical transmembrane passes span 18 to 38 (VAAG…AVTG), 144 to 164 (GAAM…AIRF), 168 to 190 (FGLA…IKIF), 195 to 217 (SLTV…IIIF), 258 to 278 (ATLA…WVMA), and 279 to 299 (FGVV…LLWI).

It belongs to the SecD/SecF family. SecF subfamily. As to quaternary structure, forms a complex with SecD. Part of the essential Sec protein translocation apparatus which comprises SecA, SecYEG and auxiliary proteins SecDF. Other proteins may also be involved.

It localises to the cell inner membrane. Its function is as follows. Part of the Sec protein translocase complex. Interacts with the SecYEG preprotein conducting channel. SecDF uses the proton motive force (PMF) to complete protein translocation after the ATP-dependent function of SecA. The protein is Protein translocase subunit SecF of Gemmatimonas aurantiaca (strain DSM 14586 / JCM 11422 / NBRC 100505 / T-27).